The primary structure comprises 61 residues: Large ribosomal subunit protein uL30 (61 aa).

Belongs to the universal ribosomal protein uL30 family. Part of the 50S ribosomal subunit.

The chain is Large ribosomal subunit protein uL30 from Neisseria gonorrhoeae (strain ATCC 700825 / FA 1090).